A 2377-amino-acid polypeptide reads, in one-letter code: DNA (cytosine-5-)-methyltransferase DMT5 (2377 aa).

The tract at residues 24-56 (GTADGAVNGGNIPNSQSQKRKRASPSPEIESEE) is disordered. In terms of domain architecture, Chromo; shadow subtype spans 62–126 (YEIDYIADSR…KNPGKPRLSP (65 aa)). Positions 150–282 (GKSRAASSTD…KSSLPKAKLR (133 aa)) are disordered. Over residues 201–213 (PTSKKVHPNKKCK) the composition is skewed to basic residues. Acidic residues-rich tracts occupy residues 217-238 (DDES…DDND) and 245-263 (EDDE…ESDE). Over residues 268–282 (PAKKTKSSLPKAKLR) the composition is skewed to basic residues. Residues 347-753 (LRVATMCSGT…IAALKVACHK (407 aa)) enclose the SAM-dependent MTase C5-type domain. The active site involves Cys440. Residues 1450-1771 (AERPVMVRGG…RSIATFMGIH (322 aa)) form the Helicase ATP-binding domain. 1463–1470 (DQVGYGKT) provides a ligand contact to ATP. 3 disordered regions span residues 1642-1680 (KGQA…ENSK), 2313-2334 (KGRG…TVKS), and 2347-2377 (SSFR…SDII). Basic and acidic residues predominate over residues 1645 to 1669 (AYRDKHDSDSKAKPITKEELERWEA). Residues 2152-2315 (KLEHLVNLIH…EIPQEEYKGR (164 aa)) form the Helicase C-terminal domain. Residues 2317 to 2334 (SSISMTNEKRTPTLTVKS) show a composition bias toward polar residues. Residues 2363 to 2377 (GVSDDDENSELSDII) show a composition bias toward acidic residues.

It in the N-terminal section; belongs to the class I-like SAM-binding methyltransferase superfamily. C5-methyltransferase family. This sequence in the C-terminal section; belongs to the SNF2/RAD54 helicase family. Interacts with SWI6. It depends on Mg(2+) as a cofactor.

Its subcellular location is the nucleus. The protein resides in the chromosome. The catalysed reaction is a 2'-deoxycytidine in DNA + S-adenosyl-L-methionine + ATP + H2O = a 5-methyl-2'-deoxycytidine in DNA + S-adenosyl-L-homocysteine + ADP + phosphate + 2 H(+). Its activity is regulated as follows. Hemimethylated DNA substrates stimulate ATP hydrolysis and this is a prerequisite for methyltransferase activity. Its function is as follows. ATP-dependent cytosine methylase that maintains DNA methylation by acting at hemimethylated palindromic 5'-CG-3' sites to produce symmetrically methylated DNA strands. DNA methylation may play a role in transcriptional silencing, particularly at transposable elements. This chain is DNA (cytosine-5-)-methyltransferase DMT5, found in Cryptococcus neoformans var. grubii serotype A (strain H99 / ATCC 208821 / CBS 10515 / FGSC 9487) (Filobasidiella neoformans var. grubii).